The following is a 320-amino-acid chain: Acetyl-coenzyme A carboxylase carboxyl transferase subunit alpha (320 aa).

One can recognise a CoA carboxyltransferase C-terminal domain in the interval 39–293 (ALDAKAAKLL…RGAIAAMLKE (255 aa)).

Belongs to the AccA family. Acetyl-CoA carboxylase is a heterohexamer composed of biotin carboxyl carrier protein (AccB), biotin carboxylase (AccC) and two subunits each of ACCase subunit alpha (AccA) and ACCase subunit beta (AccD).

Its subcellular location is the cytoplasm. The catalysed reaction is N(6)-carboxybiotinyl-L-lysyl-[protein] + acetyl-CoA = N(6)-biotinyl-L-lysyl-[protein] + malonyl-CoA. The protein operates within lipid metabolism; malonyl-CoA biosynthesis; malonyl-CoA from acetyl-CoA: step 1/1. In terms of biological role, component of the acetyl coenzyme A carboxylase (ACC) complex. First, biotin carboxylase catalyzes the carboxylation of biotin on its carrier protein (BCCP) and then the CO(2) group is transferred by the carboxyltransferase to acetyl-CoA to form malonyl-CoA. In Ruegeria pomeroyi (strain ATCC 700808 / DSM 15171 / DSS-3) (Silicibacter pomeroyi), this protein is Acetyl-coenzyme A carboxylase carboxyl transferase subunit alpha.